The primary structure comprises 156 residues: Ribosomal RNA large subunit methyltransferase H (156 aa).

S-adenosyl-L-methionine is bound by residues L72, G104, and 123–128; that span reads LGKMVW.

This sequence belongs to the RNA methyltransferase RlmH family. Homodimer.

It is found in the cytoplasm. The enzyme catalyses pseudouridine(1915) in 23S rRNA + S-adenosyl-L-methionine = N(3)-methylpseudouridine(1915) in 23S rRNA + S-adenosyl-L-homocysteine + H(+). Specifically methylates the pseudouridine at position 1915 (m3Psi1915) in 23S rRNA. This Roseobacter denitrificans (strain ATCC 33942 / OCh 114) (Erythrobacter sp. (strain OCh 114)) protein is Ribosomal RNA large subunit methyltransferase H.